The primary structure comprises 404 residues: Cysteine desulfurase IscS (404 aa).

Pyridoxal 5'-phosphate contacts are provided by residues 75–76 (AT), Asn155, Gln183, and 203–205 (SAH). Lys206 is modified (N6-(pyridoxal phosphate)lysine). Residue Thr243 coordinates pyridoxal 5'-phosphate. The Cysteine persulfide intermediate role is filled by Cys328. Residue Cys328 coordinates [2Fe-2S] cluster.

It belongs to the class-V pyridoxal-phosphate-dependent aminotransferase family. NifS/IscS subfamily. In terms of assembly, homodimer. Forms a heterotetramer with IscU, interacts with other sulfur acceptors. Pyridoxal 5'-phosphate is required as a cofactor.

It localises to the cytoplasm. The catalysed reaction is (sulfur carrier)-H + L-cysteine = (sulfur carrier)-SH + L-alanine. The protein operates within cofactor biosynthesis; iron-sulfur cluster biosynthesis. Its function is as follows. Master enzyme that delivers sulfur to a number of partners involved in Fe-S cluster assembly, tRNA modification or cofactor biosynthesis. Catalyzes the removal of elemental sulfur atoms from cysteine to produce alanine. Functions as a sulfur delivery protein for Fe-S cluster synthesis onto IscU, an Fe-S scaffold assembly protein, as well as other S acceptor proteins. The chain is Cysteine desulfurase IscS from Tolumonas auensis (strain DSM 9187 / NBRC 110442 / TA 4).